We begin with the raw amino-acid sequence, 904 residues long: Pantothenate kinase 2 (904 aa).

Residues 1 to 56 (MAANNNSDPILDEGGGGGVKHEAVGEAGEGKGGGGGAAATQAPAAMLPRSGSRPQL) form a disordered region. Residues 1–472 (MAANNNSDPI…LGDLNEKISW (472 aa)) are pantothenate kinase. Residues 473-904 (MEKFVQKGTQ…DCICKFEPVP (432 aa)) form a 4'-phosphopantetheine phosphatase region. Mn(2+)-binding residues include D735, N736, and D771. The short motif at 855–859 (EGMGR) is the Subfamily II EGMGR motif element.

This sequence in the N-terminal section; belongs to the type II pantothenate kinase family. The protein in the C-terminal section; belongs to the damage-control phosphatase family. Phosphopantetheine phosphatase II subfamily. Mn(2+) serves as cofactor. It depends on Ni(2+) as a cofactor.

It catalyses the reaction (R)-pantothenate + ATP = (R)-4'-phosphopantothenate + ADP + H(+). The catalysed reaction is (R)-4'-phosphopantothenate + H2O = (R)-pantothenate + phosphate. The enzyme catalyses (R)-4'-phosphopantetheine + H2O = (R)-pantetheine + phosphate. It carries out the reaction (R)-4'-phosphopantetheine sulfonate + H2O = (R)-pantetheine sulfonate + phosphate. It participates in cofactor biosynthesis; coenzyme A biosynthesis; CoA from (R)-pantothenate: step 1/5. Functionally, catalyzes the phosphorylation of pantothenate the first step in CoA biosynthesis. May play a role in the physiological regulation of the intracellular CoA concentration. Functionally redudant with PANK1. The phosphatase activity shows preference for normal or oxidatively damaged intermediates of 4'-phosphopantetheine, which provides strong indirect evidence that the phosphatase activity pre-empts damage in the CoA pathway. Hydrolyzing excess 4'-phosphopantetheine could constitute a directed overflow mechanism to prevent its oxidation to the S-sulfonate, sulfonate, or other forms. Hydrolyzing 4'-phosphopantetheine sulfonate or S-sulfonate would forestall their conversion to inactive forms of CoA and acyl carrier protein. The polypeptide is Pantothenate kinase 2 (Oryza sativa subsp. japonica (Rice)).